A 572-amino-acid polypeptide reads, in one-letter code: [Pyruvate dehydrogenase [acetyl-transferring]]-phosphatase 1, mitochondrial (572 aa).

Positions 95-122 (NTSGNINMPSPNPKGTETQKSQRSQNDQ) are disordered. Positions 153–543 (RYDVAQLPSN…DDLTVTVAFF (391 aa)) constitute a PPM-type phosphatase domain. 4 residues coordinate Mn(2+): Asp-197, Gly-198, Asp-424, and Asp-480. The segment covering 470–480 (EAQRPAFRYKD) has biased composition (basic and acidic residues). The interval 470–492 (EAQRPAFRYKDNNSSSPSGSNPE) is disordered. Over residues 481–491 (NNSSSPSGSNP) the composition is skewed to low complexity.

The protein belongs to the PP2C family. Mg(2+) serves as cofactor. The cofactor is Mn(2+). Processed by mitochondrial inner membrane protease (IMP) complex and released to the intermembrane space.

Its subcellular location is the mitochondrion intermembrane space. The catalysed reaction is O-phospho-L-seryl-[pyruvate dehydrogenase E1 alpha subunit] + H2O = L-seryl-[pyruvate dehydrogenase E1 alpha subunit] + phosphate. In terms of biological role, catalyzes the dephosphorylation and concomitant reactivation of the E1 alpha subunit (PDA1) of the pyruvate dehydrogenase complex. The sequence is that of [Pyruvate dehydrogenase [acetyl-transferring]]-phosphatase 1, mitochondrial (PTC5) from Saccharomyces cerevisiae (strain ATCC 204508 / S288c) (Baker's yeast).